We begin with the raw amino-acid sequence, 378 residues long: Succinyl-diaminopimelate desuccinylase (378 aa).

Histidine 67 serves as a coordination point for Zn(2+). Residue aspartate 69 is part of the active site. Aspartate 100 is a binding site for Zn(2+). The active-site Proton acceptor is glutamate 134. The Zn(2+) site is built by glutamate 135, glutamate 163, and histidine 349.

This sequence belongs to the peptidase M20A family. DapE subfamily. In terms of assembly, homodimer. Zn(2+) is required as a cofactor. The cofactor is Co(2+).

It catalyses the reaction N-succinyl-(2S,6S)-2,6-diaminopimelate + H2O = (2S,6S)-2,6-diaminopimelate + succinate. It functions in the pathway amino-acid biosynthesis; L-lysine biosynthesis via DAP pathway; LL-2,6-diaminopimelate from (S)-tetrahydrodipicolinate (succinylase route): step 3/3. Functionally, catalyzes the hydrolysis of N-succinyl-L,L-diaminopimelic acid (SDAP), forming succinate and LL-2,6-diaminopimelate (DAP), an intermediate involved in the bacterial biosynthesis of lysine and meso-diaminopimelic acid, an essential component of bacterial cell walls. In Nitrosomonas eutropha (strain DSM 101675 / C91 / Nm57), this protein is Succinyl-diaminopimelate desuccinylase.